Here is a 527-residue protein sequence, read N- to C-terminus: Zinc finger protein 35 (527 aa).

The segment at 9 to 221 (MALAPWGPVK…NPKTQLGQKP (213 aa)) is globular domain. The tract at residues 16–38 (PVKVKKEEEEEENFPGQASSQQV) is disordered. Glycyl lysine isopeptide (Lys-Gly) (interchain with G-Cter in SUMO2) cross-links involve residues K20, K21, K99, K117, K125, K144, K158, K189, and K214. 2 consecutive C2H2-type zinc fingers follow at residues 222 to 244 (FTCS…QRIH) and 250 to 272 (FECH…QRIH). A Glycyl lysine isopeptide (Lys-Gly) (interchain with G-Cter in SUMO2) cross-link involves residue K276. 9 C2H2-type zinc fingers span residues 278–300 (YVCS…QKIH), 306–328 (FKCN…QKVH), 334–356 (YECN…QRIH), 362–384 (FACN…QRSH), 390–412 (YECK…QRIH), 418–440 (YDCS…QRIH), 446–468 (YVCN…QRIH), 474–496 (YTCN…QRTH), and 502–524 (YECE…HRTH).

It belongs to the krueppel C2H2-type zinc-finger protein family.

It localises to the nucleus. Its function is as follows. May be involved in transcriptional regulation. Involved in cell differentiation and/or proliferation. The chain is Zinc finger protein 35 (ZNF35) from Homo sapiens (Human).